We begin with the raw amino-acid sequence, 227 residues long: MGQKVNPVGMRIGITRDWTSNWYADKKDFADRLNEDLNVRQLLQKRLKGAAVSRIQIERPARNAKIIIHSARPGVIIGKKGGEIEALRDEISKVMKVPVHITIEEVRKPELDAKLVAENIAQQLERRVMFRRAMKRAVQNTLRQGALGVKISVSGRLGGAEIARTEWYREGRVPLHTFRADIDYATASAKTTYGIIGVKVWIFKGEVHAPKPQAEEAAPQETEEEVK.

One can recognise a KH type-2 domain in the interval 39–107 (VRQLLQKRLK…PVHITIEEVR (69 aa)).

It belongs to the universal ribosomal protein uS3 family. Part of the 30S ribosomal subunit. Forms a tight complex with proteins S10 and S14.

In terms of biological role, binds the lower part of the 30S subunit head. Binds mRNA in the 70S ribosome, positioning it for translation. The sequence is that of Small ribosomal subunit protein uS3 from Coxiella burnetii (strain CbuK_Q154) (Coxiella burnetii (strain Q154)).